A 115-amino-acid chain; its full sequence is Potassium-transporting ATPase potassium-binding subunit (115 aa).

A run of 2 helical transmembrane segments spans residues 8 to 28 and 60 to 80; these read YFLLLIVIAVPLGKYLYVAFF and SYCTALLIVNAALLGISYGLL.

This sequence belongs to the KdpA family. In terms of assembly, the system is composed of three essential subunits: KdpA, KdpB and KdpC.

The protein localises to the cell membrane. Its function is as follows. Part of the high-affinity ATP-driven potassium transport (or Kdp) system, which catalyzes the hydrolysis of ATP coupled with the electrogenic transport of potassium into the cytoplasm. This subunit binds the extracellular potassium ions and delivers the ions to the membrane domain of KdpB through an intramembrane tunnel. In Geobacillus stearothermophilus (Bacillus stearothermophilus), this protein is Potassium-transporting ATPase potassium-binding subunit.